Consider the following 145-residue polypeptide: Large ribosomal subunit protein uL13 (145 aa).

This sequence belongs to the universal ribosomal protein uL13 family. In terms of assembly, part of the 50S ribosomal subunit.

In terms of biological role, this protein is one of the early assembly proteins of the 50S ribosomal subunit, although it is not seen to bind rRNA by itself. It is important during the early stages of 50S assembly. This is Large ribosomal subunit protein uL13 from Staphylococcus carnosus (strain TM300).